The following is a 406-amino-acid chain: COP9 signalosome complex subunit 4 (406 aa).

Residue A2 is modified to N-acetylalanine. K25 carries the N6-acetyllysine modification. The region spanning 197–366 is the PCI domain; the sequence is YRRKFIEAAQ…GIVHFETREA (170 aa).

The protein belongs to the CSN4 family. In terms of assembly, component of the CSN complex, composed of COPS1/GPS1, COPS2, COPS3, COPS4, COPS5, COPS6, COPS7 (COPS7A or COPS7B), COPS8 and COPS9. In the complex, it probably interacts directly with COPS1, COPS2, COPS3, COPS5, COPS6, COPS7 (COPS7A or COPS7B) and COPS8. Interacts with TOR1A; the interaction is direct and associates TOR1A and SNAPIN with the CSN complex. Interacts with STON2; controls STON2 neddylation levels. Interacts with ERCC6.

The protein localises to the cytoplasm. Its subcellular location is the nucleus. It localises to the cytoplasmic vesicle. The protein resides in the secretory vesicle. It is found in the synaptic vesicle. Its function is as follows. Component of the COP9 signalosome complex (CSN), a complex involved in various cellular and developmental processes. The CSN complex is an essential regulator of the ubiquitin (Ubl) conjugation pathway by mediating the deneddylation of the cullin subunits of SCF-type E3 ligase complexes, leading to decrease the Ubl ligase activity of SCF-type complexes such as SCF, CSA or DDB2. Also involved in the deneddylation of non-cullin subunits such as STON2. The complex is also involved in phosphorylation of p53/TP53, c-jun/JUN, IkappaBalpha/NFKBIA, ITPK1, IRF8/ICSBP and SNAPIN, possibly via its association with CK2 and PKD kinases. CSN-dependent phosphorylation of TP53 and JUN promotes and protects degradation by the Ubl system, respectively. In Mus musculus (Mouse), this protein is COP9 signalosome complex subunit 4 (Cops4).